We begin with the raw amino-acid sequence, 130 residues long: Small ribosomal subunit protein uS9 (130 aa).

The protein belongs to the universal ribosomal protein uS9 family.

This is Small ribosomal subunit protein uS9 from Bordetella pertussis (strain Tohama I / ATCC BAA-589 / NCTC 13251).